Here is a 732-residue protein sequence, read N- to C-terminus: Zinc-exporting P-type ATPase (732 aa).

Residues G29–A96 form the HMA domain. 6 helical membrane passes run H105–A123, M146–L164, A172–L186, L195–D209, V342–G366, and M372–A390. The 4-aspartylphosphate intermediate role is filled by D423. The Mg(2+) site is built by D423, T425, and D625. Transmembrane regions (helical) follow at residues A676–L695 and P705–S724.

It belongs to the cation transport ATPase (P-type) (TC 3.A.3) family. Type IB subfamily.

Its subcellular location is the cell membrane. It catalyses the reaction Zn(2+)(in) + ATP + H2O = Zn(2+)(out) + ADP + phosphate + H(+). Functionally, zn(2+) efflux transporter which is involved in detoxification of zinc during infection. The chain is Zinc-exporting P-type ATPase from Mycobacterium marinum (strain ATCC BAA-535 / M).